A 115-amino-acid chain; its full sequence is Guanylin (115 aa).

The N-terminal stretch at Met1–Gly21 is a signal peptide. The propeptide occupies Val22–Asp100. Disulfide bonds link Cys69–Cys82, Cys104–Cys112, and Cys107–Cys115.

It belongs to the guanylin family.

It is found in the secreted. Endogenous activator of intestinal guanylate cyclase. It stimulates this enzyme through the same receptor binding region as the heat-stable enterotoxins. This is Guanylin (GUCA2A) from Notomys alexis (Spinifex hopping mouse).